The primary structure comprises 267 residues: tRNA pseudouridine synthase A (267 aa).

The active-site Nucleophile is the aspartate 51. Substrate is bound at residue tyrosine 109.

Belongs to the tRNA pseudouridine synthase TruA family. Homodimer.

The enzyme catalyses uridine(38/39/40) in tRNA = pseudouridine(38/39/40) in tRNA. Its function is as follows. Formation of pseudouridine at positions 38, 39 and 40 in the anticodon stem and loop of transfer RNAs. The polypeptide is tRNA pseudouridine synthase A (Staphylococcus epidermidis (strain ATCC 12228 / FDA PCI 1200)).